The chain runs to 243 residues: Adenosylcobinamide-GDP ribazoletransferase (243 aa).

5 consecutive transmembrane segments (helical) span residues 31-51, 57-77, 109-129, 135-155, and 188-208; these read LLFYPLVGLLFGVILWALNIA, LLLHAALLLAVWVLLSGALHL, IAVVTLVLVLLLKFAALLALI, MALIIVPLIGRAALLGLFLTT, and LVIAGFNAVVALLLAVIVFIW.

It belongs to the CobS family. Mg(2+) is required as a cofactor.

It localises to the cell inner membrane. It carries out the reaction alpha-ribazole + adenosylcob(III)inamide-GDP = adenosylcob(III)alamin + GMP + H(+). It catalyses the reaction alpha-ribazole 5'-phosphate + adenosylcob(III)inamide-GDP = adenosylcob(III)alamin 5'-phosphate + GMP + H(+). The protein operates within cofactor biosynthesis; adenosylcobalamin biosynthesis; adenosylcobalamin from cob(II)yrinate a,c-diamide: step 7/7. Joins adenosylcobinamide-GDP and alpha-ribazole to generate adenosylcobalamin (Ado-cobalamin). Also synthesizes adenosylcobalamin 5'-phosphate from adenosylcobinamide-GDP and alpha-ribazole 5'-phosphate. In Pseudomonas fluorescens (strain Pf0-1), this protein is Adenosylcobinamide-GDP ribazoletransferase.